The following is an 805-amino-acid chain: Replication restart protein PriA (805 aa).

The segment at 1–110 (MNFAEVIVDV…QAMLPAALKA (110 aa)) is 3'BD. Residues 111-166 (KYEKELKIAHGADLPPQVERLFSETKTLLYSDIPDHETLKLIQRHVQKGDIDVTYK) are linker. A WH region spans residues 167–253 (VAQKTNKKMV…KESYEEVYRD (87 aa)). The Helicase ATP-binding domain occupies 282–448 (TLDSDEHKVF…QKGVYELLSL (167 aa)). An ATP-binding site is contributed by 295–302 (GVTGSGKT). The DEAH box motif lies at 391–394 (DEEH). The Zn(2+) site is built by Cys-510, Cys-513, Cys-519, Cys-522, Cys-537, Cys-540, Cys-550, and Cys-553. Residues 545–699 (PVPHTCPECA…TFYQHEMAHR (155 aa)) form the Helicase C-terminal domain.

The protein belongs to the helicase family. PriA subfamily. Monomer. Component of the replication restart primosome which assembles in this order; PriA, DnaD then DnaB. The preferred DNA substrate mimics an arrested DNA replication fork with unreplicated lagging strand. Interacts with DnaD but not DnaB. Interacts with SSB (sbbA) via the latter's 35 residue C-terminal tail which tethers PriA to ssDNA. Colocalizes with DNA pol III subunit gamma/tau (dnaX). May interact with RarA. Zn(2+) serves as cofactor.

The protein resides in the cytoplasm. It is found in the nucleoid. The enzyme catalyses Couples ATP hydrolysis with the unwinding of duplex DNA by translocating in the 3'-5' direction.. It catalyses the reaction ATP + H2O = ADP + phosphate + H(+). Initiates the restart of stalled replication forks, which reloads the replicative helicase on sites other than the origin of replication. Recognizes and binds to abandoned replication forks and remodels them to uncover a helicase loading site. Promotes assembly of the primosome at these replication forks. Serves as the initiating protein for assembly of the replication restart primosome; binding of PriA to an arrested DNA replication fork with unreplicated lagging strand triggers assembly. Sequentially DnaD (possibly as a dimer) and DnaB homotetramers bind. Assembly probably continues by loading of the DnaC replicative helicase aided by helicase loader DnaI. A single-strand (ss)DNA-dependent ATPase with helicase activity. Recognizes and binds the arrested nascent DNA chain at stalled replication forks. Binds forked DNA substrates and makes a larger complex with RarA; RarA has no effect on the helicase function. Binds ssDNA, D-loops and replication fork-like substrates but not double-stranded (ds)DNA; the preferred DNA substrate mimics an arrested DNA replication fork with an unreplicated lagging strand. Recognizes nicked dsDNA. A supershift on ssDNA occurs in the presence of single-stranded binding protein (SSB). Cannot substitute for E.coli PriA. Its function is as follows. Required for replication of plasmids that have a rolling circle mechanism, which produces circular single-stranded (ss)DNA intermediates corresponding to the lagging strand template, which are then converted into double-stranded (ds)DNA; priA is required to activate the conversion of ssDNA into dsDNA. The polypeptide is Replication restart protein PriA (Bacillus subtilis (strain 168)).